The chain runs to 458 residues: Phosphoglucosamine mutase (458 aa).

The Phosphoserine intermediate role is filled by S108. Residues S108, D247, D249, and D251 each coordinate Mg(2+). Residue S108 is modified to Phosphoserine.

It belongs to the phosphohexose mutase family. Requires Mg(2+) as cofactor. Post-translationally, activated by phosphorylation.

The enzyme catalyses alpha-D-glucosamine 1-phosphate = D-glucosamine 6-phosphate. Its function is as follows. Catalyzes the conversion of glucosamine-6-phosphate to glucosamine-1-phosphate. In Nitrosomonas eutropha (strain DSM 101675 / C91 / Nm57), this protein is Phosphoglucosamine mutase.